A 205-amino-acid polypeptide reads, in one-letter code: Ribosomal RNA large subunit methyltransferase E (205 aa).

S-adenosyl-L-methionine is bound by residues Gly60, Trp62, Asp80, Asp96, and Asp121. The active-site Proton acceptor is Lys161.

It belongs to the class I-like SAM-binding methyltransferase superfamily. RNA methyltransferase RlmE family.

The protein resides in the cytoplasm. The enzyme catalyses uridine(2552) in 23S rRNA + S-adenosyl-L-methionine = 2'-O-methyluridine(2552) in 23S rRNA + S-adenosyl-L-homocysteine + H(+). In terms of biological role, specifically methylates the uridine in position 2552 of 23S rRNA at the 2'-O position of the ribose in the fully assembled 50S ribosomal subunit. This Chromobacterium violaceum (strain ATCC 12472 / DSM 30191 / JCM 1249 / CCUG 213 / NBRC 12614 / NCIMB 9131 / NCTC 9757 / MK) protein is Ribosomal RNA large subunit methyltransferase E.